Here is a 128-residue protein sequence, read N- to C-terminus: Calcitonin gene-related peptide 1 (128 aa).

The signal sequence occupies residues Met1 to Ala25. Residues Val26–Gln80 constitute a propeptide that is removed on maturation. The cysteines at positions 84 and 89 are disulfide-linked. At Phe119 the chain carries Phenylalanine amide. The propeptide occupies Asp125–Ala128.

The protein belongs to the calcitonin family. As to expression, detected in nerve cells of cerebrum, hippocampus and pons/midbrain in newborns, and only in nerve cells of pons/midbrain in adult.

It localises to the secreted. CGRP1/CALCA is a peptide hormone that induces vasodilation mediated by the CALCRL-RAMP1 receptor complex. Dilates a variety of vessels including the coronary, cerebral and systemic vasculature. Its abundance in the CNS also points toward a neurotransmitter or neuromodulator role. It also elevates platelet cAMP. CGRP1 can also bind and activate CALCR-RAMP1 (AMYR1) receptor complex. This chain is Calcitonin gene-related peptide 1, found in Mus musculus (Mouse).